A 493-amino-acid polypeptide reads, in one-letter code: Glutamate--tRNA ligase (493 aa).

The 'HIGH' region signature appears at 10 to 20 (PSPTGDPHVGT). A 'KMSKS' region motif is present at residues 251–255 (KLSKR). ATP is bound at residue Lys254.

Belongs to the class-I aminoacyl-tRNA synthetase family. Glutamate--tRNA ligase type 1 subfamily. In terms of assembly, monomer.

It is found in the cytoplasm. It carries out the reaction tRNA(Glu) + L-glutamate + ATP = L-glutamyl-tRNA(Glu) + AMP + diphosphate. Functionally, catalyzes the attachment of glutamate to tRNA(Glu) in a two-step reaction: glutamate is first activated by ATP to form Glu-AMP and then transferred to the acceptor end of tRNA(Glu). The protein is Glutamate--tRNA ligase of Pseudomonas putida (strain ATCC 700007 / DSM 6899 / JCM 31910 / BCRC 17059 / LMG 24140 / F1).